A 201-amino-acid polypeptide reads, in one-letter code: LexA repressor (201 aa).

The H-T-H motif DNA-binding region spans 29 to 49 (VREICKAVGLSSTSSVHFHLK). Residues Ser-125 and Lys-162 each act as for autocatalytic cleavage activity in the active site.

This sequence belongs to the peptidase S24 family. In terms of assembly, homodimer.

The catalysed reaction is Hydrolysis of Ala-|-Gly bond in repressor LexA.. Functionally, represses a number of genes involved in the response to DNA damage (SOS response), including recA and lexA. In the presence of single-stranded DNA, RecA interacts with LexA causing an autocatalytic cleavage which disrupts the DNA-binding part of LexA, leading to derepression of the SOS regulon and eventually DNA repair. This Clostridium botulinum (strain 657 / Type Ba4) protein is LexA repressor.